We begin with the raw amino-acid sequence, 128 residues long: Sulfurtransferase TusD (128 aa).

The active-site Cysteine persulfide intermediate is cysteine 78.

It belongs to the DsrE/TusD family. In terms of assembly, heterohexamer, formed by a dimer of trimers. The hexameric TusBCD complex contains 2 copies each of TusB, TusC and TusD. The TusBCD complex interacts with TusE.

It is found in the cytoplasm. Functionally, part of a sulfur-relay system required for 2-thiolation of 5-methylaminomethyl-2-thiouridine (mnm(5)s(2)U) at tRNA wobble positions. Accepts sulfur from TusA and transfers it in turn to TusE. The polypeptide is Sulfurtransferase TusD (Shigella dysenteriae serotype 1 (strain Sd197)).